The following is a 510-amino-acid chain: Putative cytochrome P450 cyp-13B1 (510 aa).

Cys-456 provides a ligand contact to heme.

Belongs to the cytochrome P450 family. Heme serves as cofactor.

Cytochromes P450 are a group of heme-thiolate monooxygenases. They oxidize a variety of structurally unrelated compounds, including steroids, fatty acids, and xenobiotics. May play a role in the regulation of lifespan. This Caenorhabditis elegans protein is Putative cytochrome P450 cyp-13B1.